A 490-amino-acid polypeptide reads, in one-letter code: 2,3-bisphosphoglycerate-independent phosphoglycerate mutase (490 aa).

2 residues coordinate Mn(2+): Asp-9 and Ser-59. The active-site Phosphoserine intermediate is Ser-59. Substrate-binding positions include His-116, 145 to 146, Arg-175, Arg-181, 246 to 249, and Lys-319; these read RD and RSDR. Mn(2+)-binding residues include Asp-385, His-389, Asp-426, His-427, and His-444.

This sequence belongs to the BPG-independent phosphoglycerate mutase family. In terms of assembly, monomer. It depends on Mn(2+) as a cofactor.

The catalysed reaction is (2R)-2-phosphoglycerate = (2R)-3-phosphoglycerate. Its pathway is carbohydrate degradation; glycolysis; pyruvate from D-glyceraldehyde 3-phosphate: step 3/5. Its function is as follows. Catalyzes the interconversion of 2-phosphoglycerate and 3-phosphoglycerate. In Helicobacter hepaticus (strain ATCC 51449 / 3B1), this protein is 2,3-bisphosphoglycerate-independent phosphoglycerate mutase.